The chain runs to 293 residues: Cyclohexadienyl dehydrogenase (293 aa).

The Prephenate/arogenate dehydrogenase domain maps to 5–293 (KHIAIIGLGL…ALKTDHDIRP (289 aa)). 6-30 (HIAIIGLGLIGSSAARATKAYCPDV) contributes to the NAD(+) binding site.

It belongs to the prephenate/arogenate dehydrogenase family. As to quaternary structure, homodimer.

It carries out the reaction L-arogenate + NAD(+) = L-tyrosine + CO2 + NADH. The catalysed reaction is prephenate + NAD(+) = 3-(4-hydroxyphenyl)pyruvate + CO2 + NADH. Its pathway is amino-acid biosynthesis; L-tyrosine biosynthesis; (4-hydroxyphenyl)pyruvate from prephenate (NAD(+) route): step 1/1. The protein operates within amino-acid biosynthesis; L-tyrosine biosynthesis; L-tyrosine from L-arogenate (NAD(+) route): step 1/1. Insensitive to feedback inhibition by L-tyrosine. Functionally, can function as either prephenate dehydrogenase or as arogenate dehydrogenase in the biosynthesis of L-tyrosine. Catalyzes two analogous reactions: converts prephenate to 4-hydroxyphenylpyruvate and transforms L-arogenate to L-tyrosine. Is not able to utilize NADP(+) instead of NAD(+) as cosubstrate. In Zymomonas mobilis subsp. mobilis (strain ATCC 31821 / ZM4 / CP4), this protein is Cyclohexadienyl dehydrogenase.